Here is a 119-residue protein sequence, read N- to C-terminus: Holo-[acyl-carrier-protein] synthase (119 aa).

Mg(2+) contacts are provided by D8 and E59.

Belongs to the P-Pant transferase superfamily. AcpS family. Mg(2+) is required as a cofactor.

It is found in the cytoplasm. The enzyme catalyses apo-[ACP] + CoA = holo-[ACP] + adenosine 3',5'-bisphosphate + H(+). In terms of biological role, transfers the 4'-phosphopantetheine moiety from coenzyme A to a Ser of acyl-carrier-protein. This chain is Holo-[acyl-carrier-protein] synthase, found in Staphylococcus aureus (strain USA300).